The sequence spans 431 residues: Putative serine/threonine-protein kinase B (431 aa).

Residues 20-279 (YLNKGIVGLG…VRENFQIPYI (260 aa)) form the Protein kinase domain. Residues 26-34 (VGLGSYGEG) and lysine 49 each bind ATP. The Proton acceptor role is filled by aspartate 147. The 99-residue stretch at 331–429 (DVTHRGHVNK…WVHAIQRGIG (99 aa)) folds into the PH domain.

This sequence belongs to the protein kinase superfamily. Ser/Thr protein kinase family.

It carries out the reaction L-seryl-[protein] + ATP = O-phospho-L-seryl-[protein] + ADP + H(+). The catalysed reaction is L-threonyl-[protein] + ATP = O-phospho-L-threonyl-[protein] + ADP + H(+). The sequence is that of Putative serine/threonine-protein kinase B (NRKB) from Trypanosoma brucei brucei.